Reading from the N-terminus, the 251-residue chain is MSMTLQPHSLIELPADLDRDRLPRHVAVIMDGNGRWAKQRNLPRIMGHQRGVDTLKDLLRCCKDWGIEALTAYAFSTENWGRPLPEVEFLMTLFEQVLRRELGEMVAEGVQIHFVGDLTCLPKSLQAEIERAVAATANNQKIKFVVATNYGGRREIIHACRSIAAQVKAGLLDPADIDEVLFERHLYTGGLPDPDLLIRTSGELRISNFFLWQVAYAEIYVTKTLWPDFDRSAFHEALRDYQQRQRRFGRV.

Asp-31 is an active-site residue. Asp-31 contributes to the Mg(2+) binding site. Substrate-binding positions include Gly-32 to Arg-35, Trp-36, Arg-44, His-48, and Ser-76 to Glu-78. Asn-79 serves as the catalytic Proton acceptor. Substrate contacts are provided by residues Trp-80, Arg-82, Arg-199, and Arg-205–Ser-207. Residue Glu-218 coordinates Mg(2+).

Belongs to the UPP synthase family. Homodimer. Mg(2+) is required as a cofactor.

In terms of biological role, catalyzes the condensation of isopentenyl diphosphate (IPP) with allylic pyrophosphates generating different type of terpenoids. The polypeptide is Isoprenyl transferase (Thermosynechococcus vestitus (strain NIES-2133 / IAM M-273 / BP-1)).